Here is a 44-residue protein sequence, read N- to C-terminus: Metallothionein-4 (44 aa).

It belongs to the metallothionein superfamily. Type 5 family.

This protein binds cations of several transition elements. Thought to be involved in metal ion homeostasis. This Drosophila melanogaster (Fruit fly) protein is Metallothionein-4 (MtnD).